A 456-amino-acid polypeptide reads, in one-letter code: Phosphomethylpyrimidine synthase (456 aa).

Substrate-binding positions include Asn-80, Met-109, Tyr-139, His-175, Ser-195–Gly-197, Asp-236–Arg-239, and Glu-275. His-279 lines the Zn(2+) pocket. Tyr-302 contacts substrate. His-343 provides a ligand contact to Zn(2+). 3 residues coordinate [4Fe-4S] cluster: Cys-423, Cys-426, and Cys-431.

This sequence belongs to the ThiC family. It depends on [4Fe-4S] cluster as a cofactor.

The catalysed reaction is 5-amino-1-(5-phospho-beta-D-ribosyl)imidazole + S-adenosyl-L-methionine = 4-amino-2-methyl-5-(phosphooxymethyl)pyrimidine + CO + 5'-deoxyadenosine + formate + L-methionine + 3 H(+). Its pathway is cofactor biosynthesis; thiamine diphosphate biosynthesis. Its function is as follows. Catalyzes the synthesis of the hydroxymethylpyrimidine phosphate (HMP-P) moiety of thiamine from aminoimidazole ribotide (AIR) in a radical S-adenosyl-L-methionine (SAM)-dependent reaction. The sequence is that of Phosphomethylpyrimidine synthase from Synechococcus elongatus (strain ATCC 33912 / PCC 7942 / FACHB-805) (Anacystis nidulans R2).